The primary structure comprises 126 residues: Holo-[acyl-carrier-protein] synthase (126 aa).

Residues Asp8 and Glu57 each coordinate Mg(2+).

The protein belongs to the P-Pant transferase superfamily. AcpS family. Requires Mg(2+) as cofactor.

The protein resides in the cytoplasm. The catalysed reaction is apo-[ACP] + CoA = holo-[ACP] + adenosine 3',5'-bisphosphate + H(+). Its function is as follows. Transfers the 4'-phosphopantetheine moiety from coenzyme A to a Ser of acyl-carrier-protein. This is Holo-[acyl-carrier-protein] synthase from Vibrio cholerae serotype O1 (strain ATCC 39541 / Classical Ogawa 395 / O395).